The chain runs to 669 residues: UvrABC system protein B (669 aa).

The 389-residue stretch at 26-414 folds into the Helicase ATP-binding domain; it reads EGLEDGLAHQ…SGDVVEQVVR (389 aa). An ATP-binding site is contributed by 39 to 46; that stretch reads GVTGSGKT. The short motif at 92-115 is the Beta-hairpin element; sequence YYDYYQPEAYVPSSDTFIEKDASV. Positions 431-597 constitute a Helicase C-terminal domain; sequence QVDDLLSEIR…GLNKKINDIL (167 aa). One can recognise a UVR domain in the interval 629 to 664; the sequence is ESKIRELEAKMYQHAQDLEFEQAASVRDQVQALREQ.

Belongs to the UvrB family. As to quaternary structure, forms a heterotetramer with UvrA during the search for lesions. Interacts with UvrC in an incision complex.

It is found in the cytoplasm. Functionally, the UvrABC repair system catalyzes the recognition and processing of DNA lesions. A damage recognition complex composed of 2 UvrA and 2 UvrB subunits scans DNA for abnormalities. Upon binding of the UvrA(2)B(2) complex to a putative damaged site, the DNA wraps around one UvrB monomer. DNA wrap is dependent on ATP binding by UvrB and probably causes local melting of the DNA helix, facilitating insertion of UvrB beta-hairpin between the DNA strands. Then UvrB probes one DNA strand for the presence of a lesion. If a lesion is found the UvrA subunits dissociate and the UvrB-DNA preincision complex is formed. This complex is subsequently bound by UvrC and the second UvrB is released. If no lesion is found, the DNA wraps around the other UvrB subunit that will check the other stand for damage. This is UvrABC system protein B from Photorhabdus laumondii subsp. laumondii (strain DSM 15139 / CIP 105565 / TT01) (Photorhabdus luminescens subsp. laumondii).